The chain runs to 210 residues: Protein-methionine-sulfoxide reductase heme-binding subunit MsrQ (210 aa).

6 helical membrane passes run 8–28 (LAVF…AWIF), 37–57 (VLVE…LAMT), 75–95 (LGLW…LFIL), 110–130 (PYII…VTSN), 147–167 (LVYV…RADL), and 169–189 (EWAL…PMIA).

The protein belongs to the MsrQ family. As to quaternary structure, heterodimer of a catalytic subunit (MsrP) and a heme-binding subunit (MsrQ). FMN serves as cofactor. Heme b is required as a cofactor.

The protein resides in the cell inner membrane. Functionally, part of the MsrPQ system that repairs oxidized periplasmic proteins containing methionine sulfoxide residues (Met-O), using respiratory chain electrons. Thus protects these proteins from oxidative-stress damage caused by reactive species of oxygen and chlorine generated by the host defense mechanisms. MsrPQ is essential for the maintenance of envelope integrity under bleach stress, rescuing a wide series of structurally unrelated periplasmic proteins from methionine oxidation. MsrQ provides electrons for reduction to the reductase catalytic subunit MsrP, using the quinone pool of the respiratory chain. The sequence is that of Protein-methionine-sulfoxide reductase heme-binding subunit MsrQ from Pseudomonas syringae pv. tomato (strain ATCC BAA-871 / DC3000).